Reading from the N-terminus, the 230-residue chain is Demethylmenaquinone methyltransferase (230 aa).

S-adenosyl-L-methionine is bound by residues Thr-62, Asp-80, 100 to 101 (DG), and Ser-117.

The protein belongs to the class I-like SAM-binding methyltransferase superfamily. MenG/UbiE family.

The enzyme catalyses a 2-demethylmenaquinol + S-adenosyl-L-methionine = a menaquinol + S-adenosyl-L-homocysteine + H(+). The protein operates within quinol/quinone metabolism; menaquinone biosynthesis; menaquinol from 1,4-dihydroxy-2-naphthoate: step 2/2. Methyltransferase required for the conversion of demethylmenaquinol (DMKH2) to menaquinol (MKH2). This Corynebacterium urealyticum (strain ATCC 43042 / DSM 7109) protein is Demethylmenaquinone methyltransferase.